The chain runs to 100 residues: Large ribosomal subunit protein uL23 (100 aa).

Belongs to the universal ribosomal protein uL23 family. Part of the 50S ribosomal subunit. Contacts protein L29, and trigger factor when it is bound to the ribosome.

Its function is as follows. One of the early assembly proteins it binds 23S rRNA. One of the proteins that surrounds the polypeptide exit tunnel on the outside of the ribosome. Forms the main docking site for trigger factor binding to the ribosome. This chain is Large ribosomal subunit protein uL23, found in Prochlorococcus marinus (strain MIT 9515).